Consider the following 1052-residue polypeptide: Carboxylic acid reductase (1052 aa).

An adenylation (A) domain region spans residues Arg21–Tyr344. Residues Ser334 to Ala335, Thr339, and Tyr419 to Arg422 each bind AMP. The region spanning Ser560–Val643 is the Carrier domain. Ser595 carries the post-translational modification O-(pantetheine 4'-phosphoryl)serine. The segment at Gly684–Leu979 is carboxylic acid reductase (R) domain. NADP(+) contacts are provided by residues Thr693–Ile696, Arg718, Asn774–Trp776, Ser814, Tyr844, and Lys848.

It belongs to the adenylate-forming reductase family. Mg(2+) serves as cofactor.

The enzyme catalyses an aromatic aldehyde + AMP + diphosphate + NADP(+) = an aromatic carboxylate + ATP + NADPH + H(+). It catalyses the reaction a carboxylate + ATP + NADPH + H(+) = an aldehyde + AMP + diphosphate + NADP(+). The catalysed reaction is benzoate + ATP + NADPH + H(+) = benzaldehyde + AMP + diphosphate + NADP(+). It carries out the reaction (E)-cinnamate + ATP + NADPH + H(+) = (E)-cinnamaldehyde + AMP + diphosphate + NADP(+). The enzyme catalyses piperonylate + ATP + NADPH + H(+) = piperonal + AMP + diphosphate + NADP(+). It catalyses the reaction salicylate + ATP + NADPH + H(+) = salicylaldehyde + AMP + diphosphate + NADP(+). The catalysed reaction is 3-hydroxybenzoate + ATP + NADPH + H(+) = 3-hydroxybenzaldehyde + AMP + diphosphate + NADP(+). It carries out the reaction 2-methoxybenzoate + ATP + NADPH + H(+) = 2-methoxybenzaldehyde + AMP + diphosphate + NADP(+). The enzyme catalyses 3-methoxybenzoate + ATP + NADPH + H(+) = 3-methoxybenzaldehyde + AMP + diphosphate + NADP(+). It catalyses the reaction 4-hydroxybenzoate + ATP + NADPH + H(+) = 4-hydroxybenzaldehyde + AMP + diphosphate + NADP(+). The catalysed reaction is 4-methoxybenzoate + ATP + NADPH + H(+) = 4-methoxybenzaldehyde + AMP + diphosphate + NADP(+). It carries out the reaction 3-phenylpropanoate + ATP + NADPH + H(+) = 3-phenylpropanal + AMP + diphosphate + NADP(+). The enzyme catalyses picolinate + ATP + NADPH + H(+) = picolinal + AMP + diphosphate + NADP(+). It catalyses the reaction propanoate + ATP + NADPH + H(+) = propanal + AMP + diphosphate + NADP(+). The catalysed reaction is butanoate + ATP + NADPH + H(+) = butanal + AMP + diphosphate + NADP(+). It carries out the reaction pentanoate + ATP + NADPH + H(+) = pentanal + AMP + diphosphate + NADP(+). The enzyme catalyses hexanoate + ATP + NADPH + H(+) = hexanal + AMP + diphosphate + NADP(+). It catalyses the reaction heptanoate + ATP + NADPH + H(+) = heptanal + AMP + diphosphate + NADP(+). The catalysed reaction is octanoate + ATP + NADPH + H(+) = octanal + AMP + diphosphate + NADP(+). It carries out the reaction nonanoate + ATP + NADPH + H(+) = nonanal + AMP + diphosphate + NADP(+). In terms of biological role, carboxylic acid reductase that shows a broad range of substrate specificity towards aromatic acids, especially to phenyl carboxylic and phenyl acrylic acids, to convert them into their respective aldehydes. Also able to use aliphatic acids as substrates. The protein is Carboxylic acid reductase of Neurospora crassa (strain ATCC 24698 / 74-OR23-1A / CBS 708.71 / DSM 1257 / FGSC 987).